The following is a 194-amino-acid chain: uncharacterized protein (194 aa).

The N-terminal stretch at 1 to 20 (MLYKFTVLLLIYSYLRNLQA) is a signal peptide. Residues Asn31, Asn72, Asn133, and Asn157 are each glycosylated (N-linked (GlcNAc...) asparagine; by host).

This is an uncharacterized protein from Ostreid herpesvirus 1 (isolate France) (OsHV-1).